A 433-amino-acid polypeptide reads, in one-letter code: Probable glycine dehydrogenase (decarboxylating) subunit 1 (433 aa).

It belongs to the GcvP family. N-terminal subunit subfamily. The glycine cleavage system is composed of four proteins: P, T, L and H. In this organism, the P 'protein' is a heterodimer of two subunits.

It carries out the reaction N(6)-[(R)-lipoyl]-L-lysyl-[glycine-cleavage complex H protein] + glycine + H(+) = N(6)-[(R)-S(8)-aminomethyldihydrolipoyl]-L-lysyl-[glycine-cleavage complex H protein] + CO2. In terms of biological role, the glycine cleavage system catalyzes the degradation of glycine. The P protein binds the alpha-amino group of glycine through its pyridoxal phosphate cofactor; CO(2) is released and the remaining methylamine moiety is then transferred to the lipoamide cofactor of the H protein. The polypeptide is Probable glycine dehydrogenase (decarboxylating) subunit 1 (Thermoplasma acidophilum (strain ATCC 25905 / DSM 1728 / JCM 9062 / NBRC 15155 / AMRC-C165)).